Here is a 438-residue protein sequence, read N- to C-terminus: MADYQDKNVVIIGLGLTGLSCVDFFLARGVTPRVMDTRVTPPGLDKLPQEVERHVGGLNDEWLLAADLIVASPGIALAHPSLSAAASAGVEIVGDIELFCREAQEPIVAITGSNGKSTVTTLVGEMAKAAGVNVGVGGNIGLPALMLLDADRELYVLELSSFQLETTSSLQAAAATVLNVTEDHMDRYPFGLQQYRAAKLRVYEKAKVCVVNADDALTMPVRGADERCVSFGVNMGDYHLNRQQGETWLRVKGEKVLNVKEMKLSGQHNYTNALAALALADAVGLPRASSLKALTTFTGLAHRFQLALEHNGVRWINDSKATNVGSTEAALNGLHVDGTLHLLLGGDGKSADFSPLTRYLTGDRIRLYCFGRDGAQLAALRPEIAQQTETMEEAMRLLAPRVQPGDMVLLSPACASLDQFKNFEQRGDVFTRLAKELG.

ATP is bound at residue 112–118 (GSNGKST).

Belongs to the MurCDEF family.

The protein localises to the cytoplasm. It catalyses the reaction UDP-N-acetyl-alpha-D-muramoyl-L-alanine + D-glutamate + ATP = UDP-N-acetyl-alpha-D-muramoyl-L-alanyl-D-glutamate + ADP + phosphate + H(+). The protein operates within cell wall biogenesis; peptidoglycan biosynthesis. Functionally, cell wall formation. Catalyzes the addition of glutamate to the nucleotide precursor UDP-N-acetylmuramoyl-L-alanine (UMA). The polypeptide is UDP-N-acetylmuramoylalanine--D-glutamate ligase (Salmonella choleraesuis (strain SC-B67)).